A 335-amino-acid polypeptide reads, in one-letter code: Tetraacyldisaccharide 4'-kinase (335 aa).

Residue 51–58 (HVGGAGKT) coordinates ATP.

Belongs to the LpxK family.

The enzyme catalyses a lipid A disaccharide + ATP = a lipid IVA + ADP + H(+). Its pathway is glycolipid biosynthesis; lipid IV(A) biosynthesis; lipid IV(A) from (3R)-3-hydroxytetradecanoyl-[acyl-carrier-protein] and UDP-N-acetyl-alpha-D-glucosamine: step 6/6. Its function is as follows. Transfers the gamma-phosphate of ATP to the 4'-position of a tetraacyldisaccharide 1-phosphate intermediate (termed DS-1-P) to form tetraacyldisaccharide 1,4'-bis-phosphate (lipid IVA). This is Tetraacyldisaccharide 4'-kinase from Nitrobacter hamburgensis (strain DSM 10229 / NCIMB 13809 / X14).